A 34-amino-acid chain; its full sequence is Brevinin-2Rf (34 aa).

The cysteines at positions 28 and 34 are disulfide-linked.

In terms of tissue distribution, expressed by the skin glands.

The protein localises to the secreted. Functionally, antimicrobial peptide. In Pelophylax ridibundus (Marsh frog), this protein is Brevinin-2Rf.